Here is a 510-residue protein sequence, read N- to C-terminus: Lysine--tRNA ligase (510 aa).

Residues Glu-420 and Glu-427 each coordinate Mg(2+).

Belongs to the class-II aminoacyl-tRNA synthetase family. In terms of assembly, homodimer. The cofactor is Mg(2+).

It is found in the cytoplasm. It catalyses the reaction tRNA(Lys) + L-lysine + ATP = L-lysyl-tRNA(Lys) + AMP + diphosphate. In Ralstonia nicotianae (strain ATCC BAA-1114 / GMI1000) (Ralstonia solanacearum), this protein is Lysine--tRNA ligase.